Consider the following 139-residue polypeptide: uncharacterized protein (139 aa).

This is an uncharacterized protein from Sinorhizobium fredii (strain NBRC 101917 / NGR234).